The following is a 334-amino-acid chain: Glycerol-1-phosphate dehydrogenase [NAD(P)+] (334 aa).

Residues 77 to 81 (GRPID) and 99 to 102 (TTAS) each bind NAD(+). Position 104 (Asp104) interacts with substrate. Ser108 provides a ligand contact to NAD(+). Asp147 is a substrate binding site. Zn(2+) is bound by residues Asp147 and His225. His229 lines the substrate pocket. Position 246 (His246) interacts with Zn(2+).

It belongs to the glycerol-1-phosphate dehydrogenase family. Requires Zn(2+) as cofactor.

It localises to the cytoplasm. It catalyses the reaction sn-glycerol 1-phosphate + NAD(+) = dihydroxyacetone phosphate + NADH + H(+). It carries out the reaction sn-glycerol 1-phosphate + NADP(+) = dihydroxyacetone phosphate + NADPH + H(+). It functions in the pathway membrane lipid metabolism; glycerophospholipid metabolism. Catalyzes the NAD(P)H-dependent reduction of dihydroxyacetonephosphate (DHAP or glycerone phosphate) to glycerol 1-phosphate (G1P). The G1P thus generated is used as the glycerophosphate backbone of phospholipids in the cellular membranes of Archaea. The protein is Glycerol-1-phosphate dehydrogenase [NAD(P)+] of Methanococcus maripaludis (strain DSM 14266 / JCM 13030 / NBRC 101832 / S2 / LL).